Consider the following 338-residue polypeptide: MRVFYDKDCDLSIIQGKKVAIIGYGSQGHAHACNLKDSGVDVTVGLRSGSATVAKAEAHGLKVADVKSAVAAADVVMILTPDEFQGRLYKEEIEPNLKKGATLAFAHGFSIHYNQVVPRADLDVIMIAPKAPGHTVRSEFVKGGGIPDLIAIYQDASGNAKNVALSYACGVGGGRTGIIETTFKDETETDLFGEQAVLCGGCVELVKAGFETLVEAGYAPEMAYFECLHELKLIVDLMYEGGIANMNYSISNNAEYGEYVTGPEVINAESRAAMRNALKRIQDGEYAKMFITEGAANYPSMTAYRRNNAAHPIEQIGEKLRAMMPWIAANKIVDKSKN.

In terms of domain architecture, KARI N-terminal Rossmann spans 1 to 181 (MRVFYDKDCD…GGGRTGIIET (181 aa)). Residues 24–27 (YGSQ), Arg47, Ser50, Thr52, and 82–85 (DEFQ) contribute to the NADP(+) site. His107 is an active-site residue. Gly133 is an NADP(+) binding site. The 146-residue stretch at 182–327 (TFKDETETDL…EKLRAMMPWI (146 aa)) folds into the KARI C-terminal knotted domain. Residues Asp190, Glu194, Glu226, and Glu230 each coordinate Mg(2+). Ser251 serves as a coordination point for substrate.

It belongs to the ketol-acid reductoisomerase family. It depends on Mg(2+) as a cofactor.

The catalysed reaction is (2R)-2,3-dihydroxy-3-methylbutanoate + NADP(+) = (2S)-2-acetolactate + NADPH + H(+). The enzyme catalyses (2R,3R)-2,3-dihydroxy-3-methylpentanoate + NADP(+) = (S)-2-ethyl-2-hydroxy-3-oxobutanoate + NADPH + H(+). It functions in the pathway amino-acid biosynthesis; L-isoleucine biosynthesis; L-isoleucine from 2-oxobutanoate: step 2/4. The protein operates within amino-acid biosynthesis; L-valine biosynthesis; L-valine from pyruvate: step 2/4. Involved in the biosynthesis of branched-chain amino acids (BCAA). Catalyzes an alkyl-migration followed by a ketol-acid reduction of (S)-2-acetolactate (S2AL) to yield (R)-2,3-dihydroxy-isovalerate. In the isomerase reaction, S2AL is rearranged via a Mg-dependent methyl migration to produce 3-hydroxy-3-methyl-2-ketobutyrate (HMKB). In the reductase reaction, this 2-ketoacid undergoes a metal-dependent reduction by NADPH to yield (R)-2,3-dihydroxy-isovalerate. The chain is Ketol-acid reductoisomerase (NADP(+)) from Pseudomonas paraeruginosa (strain DSM 24068 / PA7) (Pseudomonas aeruginosa (strain PA7)).